The sequence spans 89 residues: Protein M7 (89 aa).

An N-terminal signal peptide occupies residues 1–25 (MAAMKSLATAILVVLLLRRLPRGLS). Intrachain disulfides connect Cys-28/Cys-65, Cys-38/Cys-54, Cys-55/Cys-80, and Cys-67/Cys-87.

The protein belongs to the A9/FIL1 family. As to expression, tapetum of anthers.

The protein resides in the secreted. This chain is Protein M7 (M7), found in Lilium henryi (Henry's lily).